Consider the following 420-residue polypeptide: Exodeoxyribonuclease 7 large subunit (420 aa).

It belongs to the XseA family. As to quaternary structure, heterooligomer composed of large and small subunits.

The protein localises to the cytoplasm. It carries out the reaction Exonucleolytic cleavage in either 5'- to 3'- or 3'- to 5'-direction to yield nucleoside 5'-phosphates.. Its function is as follows. Bidirectionally degrades single-stranded DNA into large acid-insoluble oligonucleotides, which are then degraded further into small acid-soluble oligonucleotides. The protein is Exodeoxyribonuclease 7 large subunit of Helicobacter pylori (strain J99 / ATCC 700824) (Campylobacter pylori J99).